The primary structure comprises 349 residues: Small ribosomal subunit biogenesis GTPase RsgA (349 aa).

The interval 1 to 38 is disordered; that stretch reads MSKNKLSKGQERRVQANHQRRLKRTDNKPELDDSQLGE. Positions 102–272 constitute a CP-type G domain; that stretch reads TSVLNRPDIY…VIDSPGVREF (171 aa). GTP is bound by residues 158–161 and 212–220; these read NKID and GQSGVGKSS. Positions 296, 301, 303, and 309 each coordinate Zn(2+).

This sequence belongs to the TRAFAC class YlqF/YawG GTPase family. RsgA subfamily. Monomer. Associates with 30S ribosomal subunit, binds 16S rRNA. Zn(2+) is required as a cofactor.

The protein localises to the cytoplasm. Functionally, one of several proteins that assist in the late maturation steps of the functional core of the 30S ribosomal subunit. Helps release RbfA from mature subunits. May play a role in the assembly of ribosomal proteins into the subunit. Circularly permuted GTPase that catalyzes slow GTP hydrolysis, GTPase activity is stimulated by the 30S ribosomal subunit. The polypeptide is Small ribosomal subunit biogenesis GTPase RsgA (Serratia proteamaculans (strain 568)).